Here is a 509-residue protein sequence, read N- to C-terminus: Maturase K (509 aa).

Belongs to the intron maturase 2 family. MatK subfamily.

The protein resides in the plastid. It is found in the chloroplast. Usually encoded in the trnK tRNA gene intron. Probably assists in splicing its own and other chloroplast group II introns. The polypeptide is Maturase K (Metasequoia glyptostroboides (Dawn redwood)).